Reading from the N-terminus, the 510-residue chain is NAD(P)H-quinone oxidoreductase subunit 2 A, chloroplastic (510 aa).

The next 14 membrane-spanning stretches (helical) occupy residues 31–51, 59–79, 99–119, 124–144, 149–169, 184–204, 229–249, 261–281, 295–315, 323–343, 354–374, 395–415, 418–438, and 484–504; these read FIFPECILIFGLILLLMIDLT, WFYFISSTSLVISITALLFRW, IFQFLILLCSTLCIPLSVEYI, MAITEFLLFVLTATLGGMFLC, LITIFVALECFSLCSYLLSGY, LLMGGASSSILVLGFSWLYGL, ISIALIFITVGLGFKLSLAPF, PTPVVAFLSVTSKVAALALAT, WHLLLEILAILSMILGNLLAI, MLAYSSIGQIGYVIIGIIVGD, YMLFYISMNLGTFACIVLFGL, ALSLALCLLSLGGLPPLAGFF, LYLFWCGWQAGLYFLVSIGLL, and MTVCVIASTILGISMNPILAI.

The protein belongs to the complex I subunit 2 family. NDH is composed of at least 16 different subunits, 5 of which are encoded in the nucleus.

The protein resides in the plastid. It is found in the chloroplast thylakoid membrane. The catalysed reaction is a plastoquinone + NADH + (n+1) H(+)(in) = a plastoquinol + NAD(+) + n H(+)(out). The enzyme catalyses a plastoquinone + NADPH + (n+1) H(+)(in) = a plastoquinol + NADP(+) + n H(+)(out). NDH shuttles electrons from NAD(P)H:plastoquinone, via FMN and iron-sulfur (Fe-S) centers, to quinones in the photosynthetic chain and possibly in a chloroplast respiratory chain. The immediate electron acceptor for the enzyme in this species is believed to be plastoquinone. Couples the redox reaction to proton translocation, and thus conserves the redox energy in a proton gradient. This is NAD(P)H-quinone oxidoreductase subunit 2 A, chloroplastic from Saccharum hybrid (Sugarcane).